The following is a 166-amino-acid chain: SsrA-binding protein (166 aa).

Residues 146-166 (KRAAEKEKQSKKDVKAAMERY) form a disordered region.

The protein belongs to the SmpB family.

The protein localises to the cytoplasm. Required for rescue of stalled ribosomes mediated by trans-translation. Binds to transfer-messenger RNA (tmRNA), required for stable association of tmRNA with ribosomes. tmRNA and SmpB together mimic tRNA shape, replacing the anticodon stem-loop with SmpB. tmRNA is encoded by the ssrA gene; the 2 termini fold to resemble tRNA(Ala) and it encodes a 'tag peptide', a short internal open reading frame. During trans-translation Ala-aminoacylated tmRNA acts like a tRNA, entering the A-site of stalled ribosomes, displacing the stalled mRNA. The ribosome then switches to translate the ORF on the tmRNA; the nascent peptide is terminated with the 'tag peptide' encoded by the tmRNA and targeted for degradation. The ribosome is freed to recommence translation, which seems to be the essential function of trans-translation. This chain is SsrA-binding protein, found in Synechococcus sp. (strain CC9605).